The primary structure comprises 348 residues: Zinc-type alcohol dehydrogenase-like protein C2E1P3.01 (348 aa).

The protein belongs to the zinc-containing alcohol dehydrogenase family. Quinone oxidoreductase subfamily.

The protein resides in the mitochondrion. In Schizosaccharomyces pombe (strain 972 / ATCC 24843) (Fission yeast), this protein is Zinc-type alcohol dehydrogenase-like protein C2E1P3.01.